Reading from the N-terminus, the 122-residue chain is SYFFFIVVPSLLRPEALFKLFFSLVKYFFMISALSKQILFIVLLTLFKSTSAYLWSCIRNSPWLSKKVSISTCKSALRGLFCKSSWRCAKMNGDLVTIVVALVLGDLVTKVVVVVLAEDIVE.

Its subcellular location is the mitochondrion. This is an uncharacterized protein from Claviceps purpurea (Ergot fungus).